Here is a 127-residue protein sequence, read N- to C-terminus: Holo-[acyl-carrier-protein] synthase (127 aa).

Mg(2+) contacts are provided by Asp9 and Glu58.

This sequence belongs to the P-Pant transferase superfamily. AcpS family. Mg(2+) is required as a cofactor.

The protein localises to the cytoplasm. It carries out the reaction apo-[ACP] + CoA = holo-[ACP] + adenosine 3',5'-bisphosphate + H(+). Transfers the 4'-phosphopantetheine moiety from coenzyme A to a Ser of acyl-carrier-protein. In Shewanella oneidensis (strain ATCC 700550 / JCM 31522 / CIP 106686 / LMG 19005 / NCIMB 14063 / MR-1), this protein is Holo-[acyl-carrier-protein] synthase.